The following is a 347-amino-acid chain: Phosphoribosylformylglycinamidine cyclo-ligase (347 aa).

Belongs to the AIR synthase family.

Its subcellular location is the cytoplasm. It carries out the reaction 2-formamido-N(1)-(5-O-phospho-beta-D-ribosyl)acetamidine + ATP = 5-amino-1-(5-phospho-beta-D-ribosyl)imidazole + ADP + phosphate + H(+). It participates in purine metabolism; IMP biosynthesis via de novo pathway; 5-amino-1-(5-phospho-D-ribosyl)imidazole from N(2)-formyl-N(1)-(5-phospho-D-ribosyl)glycinamide: step 2/2. The protein is Phosphoribosylformylglycinamidine cyclo-ligase of Desulfatibacillum aliphaticivorans.